Consider the following 122-residue polypeptide: MDITAISLVLFGSTFGLIFRMFIQNNLKINIGFNIQNTSIVNFIASFFLGILLALNLTNNNLLLLFYIGFLGCFSTFSSFIYQLFVLLQKRKFMHLFFHYFEVIIISFICFYLGYYLMQIIK.

Transmembrane regions (helical) follow at residues I3–I23, T38–T58, L62–Y82, and F93–L113. Positions 72 and 75 each coordinate Na(+).

This sequence belongs to the fluoride channel Fluc/FEX (TC 1.A.43) family.

Its subcellular location is the cell inner membrane. It catalyses the reaction fluoride(in) = fluoride(out). Its activity is regulated as follows. Na(+) is not transported, but it plays an essential structural role and its presence is essential for fluoride channel function. Fluoride-specific ion channel. Important for reducing fluoride concentration in the cell, thus reducing its toxicity. The chain is Fluoride-specific ion channel FluC 2 from Prochlorococcus marinus (strain MIT 9312).